A 417-amino-acid polypeptide reads, in one-letter code: Gamma-glutamyl phosphate reductase (417 aa).

It belongs to the gamma-glutamyl phosphate reductase family.

Its subcellular location is the cytoplasm. It carries out the reaction L-glutamate 5-semialdehyde + phosphate + NADP(+) = L-glutamyl 5-phosphate + NADPH + H(+). The protein operates within amino-acid biosynthesis; L-proline biosynthesis; L-glutamate 5-semialdehyde from L-glutamate: step 2/2. Catalyzes the NADPH-dependent reduction of L-glutamate 5-phosphate into L-glutamate 5-semialdehyde and phosphate. The product spontaneously undergoes cyclization to form 1-pyrroline-5-carboxylate. This Heliobacterium modesticaldum (strain ATCC 51547 / Ice1) protein is Gamma-glutamyl phosphate reductase.